Reading from the N-terminus, the 188-residue chain is Protein GrpE (188 aa).

Residues 1 to 10 (MPDPTQNPNV) show a composition bias toward polar residues. Residues 1-35 (MPDPTQNPNVTPELEQHAAPEAAAEAAPESSADVM) form a disordered region. The segment covering 19-32 (APEAAAEAAPESSA) has biased composition (low complexity).

Belongs to the GrpE family. Homodimer.

The protein localises to the cytoplasm. Participates actively in the response to hyperosmotic and heat shock by preventing the aggregation of stress-denatured proteins, in association with DnaK and GrpE. It is the nucleotide exchange factor for DnaK and may function as a thermosensor. Unfolded proteins bind initially to DnaJ; upon interaction with the DnaJ-bound protein, DnaK hydrolyzes its bound ATP, resulting in the formation of a stable complex. GrpE releases ADP from DnaK; ATP binding to DnaK triggers the release of the substrate protein, thus completing the reaction cycle. Several rounds of ATP-dependent interactions between DnaJ, DnaK and GrpE are required for fully efficient folding. This is Protein GrpE from Azoarcus sp. (strain BH72).